The sequence spans 329 residues: GMP reductase (329 aa).

The active-site Thioimidate intermediate is Cys178. 207-230 (IIADGGIRNNGDIAKSIRFGATMC) lines the NADP(+) pocket.

The protein belongs to the IMPDH/GMPR family. GuaC type 2 subfamily.

The catalysed reaction is IMP + NH4(+) + NADP(+) = GMP + NADPH + 2 H(+). Its function is as follows. Catalyzes the irreversible NADPH-dependent deamination of GMP to IMP. It functions in the conversion of nucleobase, nucleoside and nucleotide derivatives of G to A nucleotides, and in maintaining the intracellular balance of A and G nucleotides. This Lacticaseibacillus paracasei (strain ATCC 334 / BCRC 17002 / CCUG 31169 / CIP 107868 / KCTC 3260 / NRRL B-441) (Lactobacillus paracasei) protein is GMP reductase.